We begin with the raw amino-acid sequence, 161 residues long: Putative allophycocyanin subunit alpha 2 (161 aa).

An N4-methylasparagine modification is found at asparagine 71. Cysteine 81 contacts (2R,3E)-phycocyanobilin.

It belongs to the phycobiliprotein family. As to quaternary structure, heterohexamer of two alpha chains, one alpha-B chain and three beta chains. In terms of processing, contains one covalently linked phycocyanobilin chromophore. The chromophore is added by phycocyanobilin lyase CpcS 1.

It localises to the cellular thylakoid membrane. Functionally, light-harvesting photosynthetic bile pigment-protein from the phycobiliprotein complex. Allophycocyanin has a maximum absorption at approximately 650 to 653 nanometers. This is Putative allophycocyanin subunit alpha 2 (apcA2) from Nostoc sp. (strain PCC 7120 / SAG 25.82 / UTEX 2576).